The following is a 675-amino-acid chain: Vitamin K-dependent protein S (675 aa).

Residues 1–24 (MRVLSVRFRVLLACLALVLPNSET) form the signal peptide. The propeptide occupies 25–41 (NFLSKERASQVLVRKRR). Residues 42 to 87 (ANTLLEETKKGNLERECIEELCNKEEAREVFENNPETDYFYPKYLG) form the Gla domain. Glu-47, Glu-48, Glu-55, Glu-57, Glu-60, Glu-61, Glu-66, Glu-67, Glu-70, Glu-73, and Glu-77 each carry 4-carboxyglutamate. Cys-58 and Cys-63 are joined by a disulfide. The segment at 88 to 116 (CLGAFRVGAFSAARQSANAYPDLRSCVNA) is thrombin-sensitive. The EGF-like 1 domain occupies 117–155 (IPDQCDPMPCNEDGYLSCKDGQGAFTCICKPGWQGDKCQ). Disulfide bonds link Cys-121–Cys-134, Cys-126–Cys-143, Cys-145–Cys-154, Cys-161–Cys-175, Cys-171–Cys-184, Cys-186–Cys-199, Cys-205–Cys-217, Cys-212–Cys-226, Cys-228–Cys-241, Cys-247–Cys-256, Cys-252–Cys-265, Cys-267–Cys-282, and Cys-449–Cys-475. Asp-136 is modified ((3R)-3-hydroxyaspartate). Positions 157 to 200 (DINECKDPSNINGGCSQTCDNTPGSYHCSCKIGFAMLTNKKDCK) constitute an EGF-like 2; calcium-binding domain. The region spanning 201 to 242 (DVDECSLKPSVCGTAVCKNIPGDFECECPNGYRYDPSSKSCK) is the EGF-like 3; calcium-binding domain. The EGF-like 4; calcium-binding domain occupies 243-283 (DVDECSENTCAQLCVNYPGGYSCYCDGKKGFKLAQDQRSCE). Laminin G-like domains are found at residues 299-475 (LLYL…NKHC) and 484-665 (YYPG…AHSC). 2 N-linked (GlcNAc...) asparagine glycosylation sites follow: Asn-499 and Asn-509.

The iron and 2-oxoglutarate dependent 3-hydroxylation of aspartate and asparagine is (R) stereospecific within EGF domains. Plasma.

The protein localises to the secreted. Functionally, anticoagulant plasma protein; it is a cofactor to activated protein C in the degradation of coagulation factors Va and VIIIa. It helps to prevent coagulation and stimulating fibrinolysis. The polypeptide is Vitamin K-dependent protein S (Pros1) (Rattus norvegicus (Rat)).